A 527-amino-acid polypeptide reads, in one-letter code: ATP synthase subunit alpha (527 aa).

172 to 179 (GDRQTGKT) lines the ATP pocket.

The protein belongs to the ATPase alpha/beta chains family. In terms of assembly, F-type ATPases have 2 components, CF(1) - the catalytic core - and CF(0) - the membrane proton channel. CF(1) has five subunits: alpha(3), beta(3), gamma(1), delta(1), epsilon(1). CF(0) has three main subunits: a(1), b(2) and c(9-12). The alpha and beta chains form an alternating ring which encloses part of the gamma chain. CF(1) is attached to CF(0) by a central stalk formed by the gamma and epsilon chains, while a peripheral stalk is formed by the delta and b chains.

Its subcellular location is the cell inner membrane. It catalyses the reaction ATP + H2O + 4 H(+)(in) = ADP + phosphate + 5 H(+)(out). Functionally, produces ATP from ADP in the presence of a proton gradient across the membrane. The alpha chain is a regulatory subunit. This chain is ATP synthase subunit alpha, found in Bacteroides thetaiotaomicron (strain ATCC 29148 / DSM 2079 / JCM 5827 / CCUG 10774 / NCTC 10582 / VPI-5482 / E50).